A 996-amino-acid polypeptide reads, in one-letter code: MYQQEEYEVNNEGQEDVSKINALNLKWTLGFNFQLTDGVHNLTNEKRKEIFYPVAHTGVIYDYENNTQRLLQGHCNRITATAYCKFSDIIVTADCGPDSMLVVWDASTGIPKKTIFEPHPNGCQALDISQDGQFIVTLSKEANTDTDVQSLSLWEWNKDDEPCLITNEFDRRIKDYQYFVRFNSDDNTEFATTGKTRIVFWRREGEQKGFNYYSPGNIPSLKVLTQTVFIPDNTQVVTGTTDGHIIVWDISLIIEKVDTPKERRAIKLVDLMNKSKKPDGKKGSNSINILKIQDNYLVIGSSNGSIRFYDFQYRIIAWFEDAIIGSISNISFANTPMIEDNEDEDGFDDERKDKGENEPKFICPDFIVVDLDATITMLNYKLFEELDDEKKKGTTLMKSIVSPIIAMSCRPNSNVIGICCENGYLYEWNFQEKSSVLSILRVFDTDKENIPNCIDYSPDGNWLSVATKSGKIHIFDCKEKQWQNSVLEVSENEQGKPKVNMQVFSSDSKNLATMDADYAVSLFTIDHRQFDVNIPEKEWQFVGKHRIHHSEIKSIAFGESKNENDKKYYRLFSIGADMKMVEYEVLEIDYSKQKEKGQQINYIDRLKLKSIYPIEQETIPTACIWYPINMYKEDVLLTVNEEFKIKLWQFMKDNFKFCKKTCLGPIYGGAINKLLILNQNDAQNDYQDKYLAYSTKEKVVGIIKLPLEGNPNQTMGLIAHPDKITSISCSNDGKHFFSSGSDDYCVNVWSVNVQALEQIFATNPNEDPYPKLLEGGEDGQTHQDLKNFFYYSQIRSKDEHTTKARKLDGKVPLIAIPDMMRSMGYYPTNKEIENMQNEIRFSKYLDPGEQVEELDLNMFLKLFVNHRPVQGIGKSKIAESLNTLTKSLSDSAKEIAEQAKGQSVQPKTYNIDGIGEISLQDLKKILTTEGERMTNEEFDECLKILCGENEDQIPQQINVNNLCEDILGFEDLEGEERDDNIEDQYEDEENEEYDQD.

WD repeat units follow at residues 73 to 114, 118 to 164, 168 to 211, 219 to 258, 282 to 319, 399 to 438, 445 to 485, 494 to 533, 547 to 593, 615 to 658, and 719 to 759; these read GHCN…PKKT, PHPN…EPCL, EFDR…KGFN, PSLKVLTQTVFIPDNTQVVTGTTDGHIIVWDISLIIEKVD, KGSNSINILKIQDNYLVIGSSNGSIRFYDFQYRIIAWF, SIVSPIIAMSCRPNSNVIGICCENGYLYEWNFQEKSSVLS, TDKE…WQNS, QGKPKVNMQVFSSDSKNLATMDADYAVSLFTIDHRQFDVN, IHHS…YSKQ, EQET…FKFC, and AHPD…LEQI. The disordered stretch occupies residues 971–996; that stretch reads DLEGEERDDNIEDQYEDEENEEYDQD.

It localises to the cell projection. It is found in the cilium. As component of a spoke-associated complex, regulates ciliary mobility by mediating a stable and functional assembly of the radial spoke 3 (RS3). This Tetrahymena thermophila (strain SB210) protein is Cilia- and flagella-associated protein 251.